The chain runs to 345 residues: tRNA N6-adenosine threonylcarbamoyltransferase (345 aa).

The Fe cation site is built by His111 and His115. Residues 134-138, Asp167, Gly180, and Asn276 each bind substrate; that span reads LVSGG. Asp304 provides a ligand contact to Fe cation.

Belongs to the KAE1 / TsaD family. It depends on Fe(2+) as a cofactor.

The protein resides in the cytoplasm. The catalysed reaction is L-threonylcarbamoyladenylate + adenosine(37) in tRNA = N(6)-L-threonylcarbamoyladenosine(37) in tRNA + AMP + H(+). In terms of biological role, required for the formation of a threonylcarbamoyl group on adenosine at position 37 (t(6)A37) in tRNAs that read codons beginning with adenine. Is involved in the transfer of the threonylcarbamoyl moiety of threonylcarbamoyl-AMP (TC-AMP) to the N6 group of A37, together with TsaE and TsaB. TsaD likely plays a direct catalytic role in this reaction. This chain is tRNA N6-adenosine threonylcarbamoyltransferase, found in Alcanivorax borkumensis (strain ATCC 700651 / DSM 11573 / NCIMB 13689 / SK2).